Reading from the N-terminus, the 399-residue chain is Argininosuccinate synthase (399 aa).

Alanine 9–serine 17 contributes to the ATP binding site. Tyrosine 85 provides a ligand contact to L-citrulline. Glycine 115 lines the ATP pocket. Residues threonine 117, asparagine 121, and aspartate 122 each contribute to the L-aspartate site. Asparagine 121 is a binding site for L-citrulline. Positions 125, 173, 258, and 270 each coordinate L-citrulline.

This sequence belongs to the argininosuccinate synthase family. Type 1 subfamily. In terms of assembly, homotetramer.

The protein resides in the cytoplasm. It catalyses the reaction L-citrulline + L-aspartate + ATP = 2-(N(omega)-L-arginino)succinate + AMP + diphosphate + H(+). It participates in amino-acid biosynthesis; L-arginine biosynthesis; L-arginine from L-ornithine and carbamoyl phosphate: step 2/3. This chain is Argininosuccinate synthase, found in Streptococcus uberis (strain ATCC BAA-854 / 0140J).